A 360-amino-acid polypeptide reads, in one-letter code: CFA/I fimbrial subunit E (360 aa).

The protein localises to the fimbrium. The chain is CFA/I fimbrial subunit E (cfaE) from Escherichia coli.